The sequence spans 862 residues: Rab GTPase-binding effector protein 1 (862 aa).

Ala-2 carries the N-acetylalanine modification. The stretch at 11 to 328 (DVSLQQRVAE…KDQEEDEQQR (318 aa)) forms a coiled coil. Lys-282 bears the N6-acetyllysine mark. 2 disordered regions span residues 315 to 340 (ELKK…KIDT) and 355 to 374 (EESS…THGS). Phosphoserine is present on residues Ser-374, Ser-377, and Ser-407. Thr-408 carries the post-translational modification Phosphothreonine. Residue Ser-410 is modified to Phosphoserine. The stretch at 534–816 (DMCSNYEKQL…LQTELDVSEQ (283 aa)) forms a coiled coil.

This sequence belongs to the rabaptin family. In terms of assembly, heterodimer with RABGEF1. The heterodimer binds RAB4A and RAB5A that have been activated by GTP-binding. Interacts with TSC2. Interacts with GGA1 (via GAE domain), GGA2 (via GAE domain) and GGA3 (via GAE domain). Interacts with AP1G1 (via GAE domain). Interacts with AP1G2 (via GAE domain). Interacts with ECPAS. Interacts with KCNH1. Interacts with PKD1 (via C-terminal domain) and GGA1; the interactions recruit PKD1:PKD2 complex to GGA1 and ARL3 at trans-Golgi network. Interacts with KCNH1. Proteolytic cleavage by caspases in apoptotic cells causes loss of endosome fusion activity.

The protein localises to the cytoplasm. The protein resides in the early endosome. It localises to the recycling endosome. It is found in the cytoplasmic vesicle. Its function is as follows. Rab effector protein acting as linker between gamma-adaptin, RAB4A and RAB5A. Involved in endocytic membrane fusion and membrane trafficking of recycling endosomes. Involved in KCNH1 channels trafficking to and from the cell membrane. Stimulates RABGEF1 mediated nucleotide exchange on RAB5A. Mediates the traffic of PKD1:PKD2 complex from the endoplasmic reticulum through the Golgi to the cilium. The sequence is that of Rab GTPase-binding effector protein 1 (Rabep1) from Rattus norvegicus (Rat).